A 58-amino-acid polypeptide reads, in one-letter code: Small ribosomal subunit protein bS21 (58 aa).

This sequence belongs to the bacterial ribosomal protein bS21 family.

The polypeptide is Small ribosomal subunit protein bS21 (Lactobacillus johnsonii (strain CNCM I-12250 / La1 / NCC 533)).